A 474-amino-acid chain; its full sequence is MPFLPFSYYPFSLEVILMEYPKIVVKPPGPRAKELIEREKKVLSTGIGVKLFPLVPKRGFGPFIEDVDGNVFIDFLAGAAAASTGYAHPKLVKAVKEQVELIQHSMIGYTHSERAIRVAEKLVEISPIENSKVIFGLSGSDAVDMAIKVSKFSTRRPWILAFIGAYHGQTLGATSVASFQVSQKRGYSPLMPNVFWIPYPNPFRNIWGINGYEEPDELINRVLDYLEYYVFSHVVPPDEVAALFAEPIQGDAGIVVPPENFFKELKKLLEEYGILLVMDEVQTGIGRTGKWFASEWFNVKPDMIIFGKGVASGMGLSGVIGRKEIMDITSGSALLTPAANPVISAAAEATLEIIEEENLLKNALEVGEFIMGRLKEIKERFEIIGDVRGKGLMIGVEIVKENGRPDPEMTGKICWRAFELGLILPSYGMFGNVIRITPPLVLTKEVAEKALEIIERAIKDTLTGKVERKVVTWH.

Pyridoxal 5'-phosphate contacts are provided by residues Gly139 to Ser140 and Gln282. Lys308 is modified (N6-(pyridoxal phosphate)lysine). Residue Thr336 coordinates pyridoxal 5'-phosphate.

The protein belongs to the class-III pyridoxal-phosphate-dependent aminotransferase family. Homohexamer. Pyridoxal 5'-phosphate serves as cofactor.

It carries out the reaction L-alanine = D-alanine. The catalysed reaction is L-serine = D-serine. Its activity is regulated as follows. Completely inhibited by hydroxylamine hydrochloride. In terms of biological role, catalyzes the interconversion of L-alanine and D-alanine, and L-serine and D-serine. Has weak activity with valine and threonine. The sequence is that of Alanine/serine racemase from Pyrococcus horikoshii (strain ATCC 700860 / DSM 12428 / JCM 9974 / NBRC 100139 / OT-3).